Reading from the N-terminus, the 628-residue chain is 1-deoxy-D-xylulose-5-phosphate synthase (628 aa).

Residues H72 and 113 to 115 (GHS) contribute to the thiamine diphosphate site. D144 contacts Mg(2+). Thiamine diphosphate contacts are provided by residues 145 to 146 (GA), N173, Y284, and E366. Position 173 (N173) interacts with Mg(2+).

This sequence belongs to the transketolase family. DXPS subfamily. As to quaternary structure, homodimer. Requires Mg(2+) as cofactor. It depends on thiamine diphosphate as a cofactor.

It carries out the reaction D-glyceraldehyde 3-phosphate + pyruvate + H(+) = 1-deoxy-D-xylulose 5-phosphate + CO2. Its pathway is metabolic intermediate biosynthesis; 1-deoxy-D-xylulose 5-phosphate biosynthesis; 1-deoxy-D-xylulose 5-phosphate from D-glyceraldehyde 3-phosphate and pyruvate: step 1/1. Functionally, catalyzes the acyloin condensation reaction between C atoms 2 and 3 of pyruvate and glyceraldehyde 3-phosphate to yield 1-deoxy-D-xylulose-5-phosphate (DXP). In Shouchella clausii (strain KSM-K16) (Alkalihalobacillus clausii), this protein is 1-deoxy-D-xylulose-5-phosphate synthase.